Here is a 608-residue protein sequence, read N- to C-terminus: Glutamine--fructose-6-phosphate aminotransferase [isomerizing] (608 aa).

Cysteine 2 (nucleophile; for GATase activity) is an active-site residue. One can recognise a Glutamine amidotransferase type-2 domain in the interval 2-217; it reads CGIVGYIGKK…DNEFVLMTKD (216 aa). SIS domains lie at 284–424 and 453–598; these read ISKE…EKGT and IMKK…VDKP. Lysine 603 serves as the catalytic For Fru-6P isomerization activity.

Homodimer.

Its subcellular location is the cytoplasm. It catalyses the reaction D-fructose 6-phosphate + L-glutamine = D-glucosamine 6-phosphate + L-glutamate. Catalyzes the first step in hexosamine metabolism, converting fructose-6P into glucosamine-6P using glutamine as a nitrogen source. The chain is Glutamine--fructose-6-phosphate aminotransferase [isomerizing] from Clostridium tetani (strain Massachusetts / E88).